The following is a 292-amino-acid chain: MLSGSIVALLTPFKADGEVDFDGLQKLVEYHIAAGTNGIVAVGTTGESSTLTVEEHVKVVNKTVEFVNGRIPVIAGTGANATHESVTFSRLLNDSGIDACLSVTPYYNKPTQEGLFQHYKAIAEVSNVPQILYNVPGRTAVDLLPETVARLAELENIVALKDATGDLNRVAIHRELCGEDFILLSGDDATGLDFVKLGGQGVISVTNNIAAKDMADMFRLALEGRFEEAEVINQRLMPLHKNLFIESSPIPVKWAATQLGLIECGHLRLPLTELSEKCHPIVAQAMTDAGIY.

Residue Thr-45 coordinates pyruvate. Tyr-133 serves as the catalytic Proton donor/acceptor. The active-site Schiff-base intermediate with substrate is Lys-161. Residue Ile-203 coordinates pyruvate.

The protein belongs to the DapA family. In terms of assembly, homotetramer; dimer of dimers.

The protein resides in the cytoplasm. It carries out the reaction L-aspartate 4-semialdehyde + pyruvate = (2S,4S)-4-hydroxy-2,3,4,5-tetrahydrodipicolinate + H2O + H(+). Its pathway is amino-acid biosynthesis; L-lysine biosynthesis via DAP pathway; (S)-tetrahydrodipicolinate from L-aspartate: step 3/4. Functionally, catalyzes the condensation of (S)-aspartate-beta-semialdehyde [(S)-ASA] and pyruvate to 4-hydroxy-tetrahydrodipicolinate (HTPA). In Vibrio vulnificus (strain YJ016), this protein is 4-hydroxy-tetrahydrodipicolinate synthase.